The sequence spans 827 residues: MVHSKKDKSVMKHSDIKKRGAAVLEEEDVLQQDEQLLVDGATIDCDSDDDEEFQSAEEEVLSSGSESSSKEGSTPGSPVEGSDEEAEDEDADEEEDEDAEFNRLLAAEEGDSEGEYGSEDFSDDNDTRPLREKLSSMQLKMIPDGESASVKTRYSDGTPRIIKPEITPVYDSDDTDVETANTIGNIPLSAYDEMPHIGYDINGKRIMRPAKGSALDALLDTIELPEGWTGLLDQNTGSSLNLTPEELDLISKIQKNEQVDDSVDPYEPYVDWFTRHEEIMPVTAIPEPKRRFVPSKHEAKRIMKIVKAIREGRIIPPNKLRELREQEQANNFSYDLWGDSEETNEHIMNLRAPKLPPPTNEESYNPPEEYLLTPEERAEWEKMDPSDRKRNFLPQKYGSLRKVPGYGESVRERFERSLDLYLAPRVRKNKLNIDPESLIPELPSPKDLRPFPIRCSTVYAGHKGKIRTLSIDPSGLWLATGSDDGTVRVWEILTGREVYKATIVDIKNNQDDHIETVEWNPDKTVGLLAVAAGENIYLLVPPIFGFEVENNSRLKIENGYGFDTFGNVKKSALNVNSDDEQAETEATVKKQVAQWNKPTQKQAENDVAIVITCRKTVKKISWHRKGDYFVSVQPESGHTSVLIHQLSKHLTQSPFNKSKGIIMDAKFHPFKPQLFVCSQRYIRIYDLSQQVLVKKLLPGARWLSTIDIHPRGDNLIASSFDKRVLWHDLDLAATPYKTLRYHEKAVRSVGFHKKLPLFCSAADDGTIHVFHGTVYDDMMKNPLLVPLKKLTGHKLVNSLGVLDTVWHPREAWLFSAGADNTARLWTT.

The interval M1 to P129 is disordered. Over residues D7–K18 the composition is skewed to basic and acidic residues. Residues C45–V60 are compositionally biased toward acidic residues. The segment covering L61 to S77 has biased composition (low complexity). Acidic residues-rich tracts occupy residues G81 to A99 and E108 to D124. The tract at residues R291–S409 is required for interaction with NOP7. A required for interaction with YTM1 region spans residues S409–P445. 6 WD repeats span residues G461–K500, N509–E549, K657–K695, P698–K737, Y741–K780, and V796–T827.

The protein belongs to the WD repeat BOP1/ERB1 family. As to quaternary structure, component of the NOP7 complex, composed of ERB1, NOP7 and YTM1. The complex is held together by ERB1, which interacts with NOP7 via its N-terminal domain and with YTM1 via a high-affinity interaction between the seven-bladed beta-propeller domains of the 2 proteins. The NOP7 complex associates with the 66S pre-ribosome.

The protein resides in the nucleus. The protein localises to the nucleolus. It localises to the nucleoplasm. Functionally, component of the NOP7 complex, which is required for maturation of the 25S and 5.8S ribosomal RNAs and formation of the 60S ribosome. The sequence is that of Ribosome biogenesis protein ERB1 from Eremothecium gossypii (strain ATCC 10895 / CBS 109.51 / FGSC 9923 / NRRL Y-1056) (Yeast).